Consider the following 82-residue polypeptide: Cytotoxin 10 (82 aa).

Positions 1–22 (MKTLLLTLVVVVTIVCLDLGYT) are cleaved as a signal peptide. 4 disulfide bridges follow: Cys25–Cys43, Cys36–Cys60, Cys64–Cys75, and Cys76–Cys81.

Belongs to the three-finger toxin family. Short-chain subfamily. Type IA cytotoxin sub-subfamily. Monomer in solution; Homodimer and oligomer in the presence of negatively charged lipids forming a pore with a size ranging between 20 and 30 Angstroms. Expressed by the venom gland.

It is found in the secreted. Its subcellular location is the target cell membrane. In terms of biological role, shows cytolytic activity on many different cells by forming pore in lipid membranes. In vivo, increases heart rate or kills the animal by cardiac arrest. In addition, it binds to heparin with high affinity, interacts with Kv channel-interacting protein 1 (KCNIP1) in a calcium-independent manner, and binds to integrin alpha-V/beta-3 (ITGAV/ITGB3) with moderate affinity. The sequence is that of Cytotoxin 10 from Naja atra (Chinese cobra).